A 219-amino-acid chain; its full sequence is Large ribosomal subunit protein uL4 (219 aa).

A disordered region spans residues Ala43–Gln100.

The protein belongs to the universal ribosomal protein uL4 family. In terms of assembly, part of the 50S ribosomal subunit.

One of the primary rRNA binding proteins, this protein initially binds near the 5'-end of the 23S rRNA. It is important during the early stages of 50S assembly. It makes multiple contacts with different domains of the 23S rRNA in the assembled 50S subunit and ribosome. Functionally, forms part of the polypeptide exit tunnel. This chain is Large ribosomal subunit protein uL4, found in Mycobacterium sp. (strain JLS).